Here is a 186-residue protein sequence, read N- to C-terminus: Ribosome-recycling factor (186 aa).

It belongs to the RRF family.

The protein resides in the cytoplasm. Its function is as follows. Responsible for the release of ribosomes from messenger RNA at the termination of protein biosynthesis. May increase the efficiency of translation by recycling ribosomes from one round of translation to another. In Cupriavidus taiwanensis (strain DSM 17343 / BCRC 17206 / CCUG 44338 / CIP 107171 / LMG 19424 / R1) (Ralstonia taiwanensis (strain LMG 19424)), this protein is Ribosome-recycling factor.